We begin with the raw amino-acid sequence, 173 residues long: Transcriptional regulator ERG homolog (173 aa).

The segment at residues 1-84 (SGQIQLWQFL…HGKRYAYKFD (84 aa)) is a DNA-binding region (ETS).

The protein belongs to the ETS family.

The protein resides in the nucleus. Its function is as follows. Acts as a transcriptional activator. The polypeptide is Transcriptional regulator ERG homolog (ERG) (Lytechinus variegatus (Green sea urchin)).